The chain runs to 108 residues: Vacuolar ATPase assembly integral membrane protein VMA21 (108 aa).

At 1–34 (MASRRSAAAKKEDFSFEAAATQSAHEAQEGFPSS) the chain is on the cytoplasmic side. The chain crosses the membrane as a helical span at residues 35–55 (VIIKLVLVTVAMICAPLGTYF). Residues 56–68 (GTLNTICGGDSSY) lie on the Lumenal side of the membrane. Residues 69 to 89 (AGALAAISVNVVLIIYLIIAA) traverse the membrane as a helical segment. The Cytoplasmic portion of the chain corresponds to 90–108 (REDTGESEEERKGKEGKEE).

This sequence belongs to the VMA21 family.

The protein resides in the endoplasmic reticulum membrane. It localises to the endoplasmic reticulum-Golgi intermediate compartment membrane. The protein localises to the cytoplasmic vesicle. Its subcellular location is the COPII-coated vesicle membrane. In terms of biological role, required for the assembly of the V0 complex of the vacuolar ATPase (V-ATPase) in the endoplasmic reticulum. This Ajellomyces capsulatus (strain NAm1 / WU24) (Darling's disease fungus) protein is Vacuolar ATPase assembly integral membrane protein VMA21.